The sequence spans 602 residues: Arginine--tRNA ligase (602 aa).

The 'HIGH' region motif lies at 124-134 (ANPTGPVHVGR).

This sequence belongs to the class-I aminoacyl-tRNA synthetase family.

The protein resides in the cytoplasm. It catalyses the reaction tRNA(Arg) + L-arginine + ATP = L-arginyl-tRNA(Arg) + AMP + diphosphate. The protein is Arginine--tRNA ligase of Halorubrum lacusprofundi (strain ATCC 49239 / DSM 5036 / JCM 8891 / ACAM 34).